Reading from the N-terminus, the 50-residue chain is C-C motif chemokine 5 (50 aa).

Belongs to the intercrine beta (chemokine CC) family.

Its subcellular location is the secreted. Functionally, chemoattractant for blood monocytes, memory T-helper cells and eosinophils. Causes the release of histamine from basophils and activates eosinophils. May activate several chemokine receptors including CCR1, CCR3, CCR4 and CCR5. May also be an agonist of the G protein-coupled receptor GPR75. Together with GPR75, may play a role in neuron survival through activation of a downstream signaling pathway involving the PI3, Akt and MAP kinases. By activating GPR75 may also play a role in insulin secretion by islet cells. The sequence is that of C-C motif chemokine 5 (CCL5) from Sus scrofa (Pig).